The chain runs to 373 residues: MAADLEPWNSTINGTWEGDELGYKCRFNEDFKYVLLPVSYGVVCVLGLCLNVVALYIFLCRLKTWNASTTYMFHLAVSDSLYAASLPLLVYYYARGDHWPFSTVLCKLVRFLFYTNLYCSILFLTCISVHRCLGVLRPLHSLRWGRARYARRVAAVVWVLVLACQAPVLYFVTTSVRGTRITCHDTSARELFSHFVAYSSVMLGLLFAVPFSVILVCYVLMARRLLKPAYGTTGGLPRAKRKSVRTIALVLAVFALCFLPFHVTRTLYYSFRSLDLSCHTLNAINMAYKITRPLASANSCLDPVLYFLAGQRLVRFARDAKPPTEPTPSPQARRKLGLHRPNRTVRKDLSVSSDDSRRTESTPAGSETKDIRL.

The Extracellular segment spans residues 1–32 (MAADLEPWNSTINGTWEGDELGYKCRFNEDFK). Asn9 and Asn13 each carry an N-linked (GlcNAc...) asparagine glycan. Residues 33–59 (YVLLPVSYGVVCVLGLCLNVVALYIFL) form a helical membrane-spanning segment. The Cytoplasmic portion of the chain corresponds to 60–70 (CRLKTWNASTT). The chain crosses the membrane as a helical span at residues 71 to 93 (YMFHLAVSDSLYAASLPLLVYYY). Topologically, residues 94–110 (ARGDHWPFSTVLCKLVR) are extracellular. Cys106 and Cys183 are joined by a disulfide. A helical membrane pass occupies residues 111–129 (FLFYTNLYCSILFLTCISV). Topologically, residues 130–152 (HRCLGVLRPLHSLRWGRARYARR) are cytoplasmic. Residues 153 to 172 (VAAVVWVLVLACQAPVLYFV) form a helical membrane-spanning segment. The Extracellular segment spans residues 173–194 (TTSVRGTRITCHDTSARELFSH). Residues 195-220 (FVAYSSVMLGLLFAVPFSVILVCYVL) form a helical membrane-spanning segment. Residues 221 to 246 (MARRLLKPAYGTTGGLPRAKRKSVRT) lie on the Cytoplasmic side of the membrane. The chain crosses the membrane as a helical span at residues 247–269 (IALVLAVFALCFLPFHVTRTLYY). At 270–287 (SFRSLDLSCHTLNAINMA) the chain is on the extracellular side. A helical transmembrane segment spans residues 288–309 (YKITRPLASANSCLDPVLYFLA). Residues 310 to 373 (GQRLVRFARD…AGSETKDIRL (64 aa)) are Cytoplasmic-facing. Positions 318 to 373 (RDAKPPTEPTPSPQARRKLGLHRPNRTVRKDLSVSSDDSRRTESTPAGSETKDIRL) are disordered. Residues 332 to 344 (ARRKLGLHRPNRT) are compositionally biased toward basic residues. The span at 345 to 360 (VRKDLSVSSDDSRRTE) shows a compositional bias: basic and acidic residues.

It belongs to the G-protein coupled receptor 1 family. As to expression, spleen, testis, kidney, liver, lung, heart and brain.

It is found in the cell membrane. Receptor for ATP and UTP coupled to G-proteins that activate a phosphatidylinositol-calcium second messenger system. The affinity range is UTP = ATP &gt; ATP-gamma-S &gt;&gt; 2-methylthio-ATP = ADP. The sequence is that of P2Y purinoceptor 2 (P2ry2) from Mus musculus (Mouse).